Consider the following 420-residue polypeptide: Histidine--tRNA ligase (420 aa).

Belongs to the class-II aminoacyl-tRNA synthetase family. Homodimer.

The protein localises to the cytoplasm. It carries out the reaction tRNA(His) + L-histidine + ATP = L-histidyl-tRNA(His) + AMP + diphosphate + H(+). The chain is Histidine--tRNA ligase from Nitrosomonas europaea (strain ATCC 19718 / CIP 103999 / KCTC 2705 / NBRC 14298).